The following is a 79-amino-acid chain: Neurotoxin ShK-like1 (79 aa).

Positions 1 to 25 (MSRKLLAVLMVCTFFLIAASMGTNA) are cleaved as a signal peptide. Residues 26–35 (LPFHEGIERR) constitute a propeptide that is removed on maturation. A ShKT domain is found at 39–78 (CVDKMPFVCMRKDIPAICKNRNHRSYAFIMDVCRKTCGQC). Disulfide bonds link C39-C78, C47-C71, and C56-C75.

In terms of tissue distribution, expressed in nematocytes (in planulae and primary polyps). Is localized predominantly in the body column nematocytes and not in the tentacles (in primary polyps).

It is found in the nematocyst. Its subcellular location is the secreted. Neurotoxin. In vivo, induces contraction paralysis followed by death (within 2 hours) on zebrafish larvae. Also induces body contraction in Nematostella 11-dpf polyps. This is Neurotoxin ShK-like1 from Nematostella vectensis (Starlet sea anemone).